The chain runs to 228 residues: Ribosomal RNA small subunit methyltransferase G (228 aa).

Residues Gly89, Leu94, 140–141 (VE), and Arg159 each bind S-adenosyl-L-methionine.

Belongs to the methyltransferase superfamily. RNA methyltransferase RsmG family.

The protein localises to the cytoplasm. The enzyme catalyses guanosine(527) in 16S rRNA + S-adenosyl-L-methionine = N(7)-methylguanosine(527) in 16S rRNA + S-adenosyl-L-homocysteine. Specifically methylates the N7 position of guanine in position 527 of 16S rRNA. The sequence is that of Ribosomal RNA small subunit methyltransferase G from Burkholderia ambifaria (strain ATCC BAA-244 / DSM 16087 / CCUG 44356 / LMG 19182 / AMMD) (Burkholderia cepacia (strain AMMD)).